The following is a 248-amino-acid chain: MAGHSKWANIQHRKGAQDAKRGKLFTKLIREITVASRTGGPDPGNNPRLRTAIDKALVANMSKDTIERAIKKGSGAADGDNYEEVRYEGYGPGGIAVLVDCLTDNRNRTVAEVRHAFSKAGGNLGTDGSVAYLFSKTGVVSFSADLGEDRVMEPALDAGADDVVVNEDGSVDVLTAPDQFEAVRDALEAAGLTPESAEVTMRASTSVKLDKEDAEKMIRLLERLEDLDDVQNVYSNADISEDILAELG.

It belongs to the TACO1 family.

It localises to the cytoplasm. The chain is Probable transcriptional regulatory protein MCA1220 from Methylococcus capsulatus (strain ATCC 33009 / NCIMB 11132 / Bath).